The following is a 469-amino-acid chain: Cytosolic beta-glucosidase (469 aa).

Gln17, His120, and Asn164 together coordinate substrate. Glu165 (proton donor) is an active-site residue. Tyr309 contacts substrate. The active-site Nucleophile is Glu373. Residues Trp417 and 424-425 (EW) contribute to the substrate site.

It belongs to the glycosyl hydrolase 1 family. Klotho subfamily. May interact with NEU2. In terms of processing, the N-terminus is blocked. As to expression, present in small intestine (at protein level). Expressed in liver, small intestine, colon, spleen and kidney. Down-regulated in renal cell carcinomas and hepatocellular carcinomas.

The protein resides in the cytoplasm. It localises to the cytosol. It carries out the reaction Hydrolysis of terminal, non-reducing beta-D-glucosyl residues with release of beta-D-glucose.. The enzyme catalyses a beta-D-glucosyl-(1&lt;-&gt;1')-N-acylsphing-4-enine + H2O = an N-acylsphing-4-enine + D-glucose. It catalyses the reaction a beta-D-galactosyl-(1&lt;-&gt;1')-N-acylsphing-4-enine + H2O = an N-acylsphing-4-enine + D-galactose. The catalysed reaction is beta-D-glucosyl-(1&lt;-&gt;1)-sphing-4-enine + H2O = sphing-4-enine + D-glucose. It carries out the reaction beta-D-glucosyl-(1&lt;-&gt;1)-N-octadecanoylsphing-4-enine + H2O = N-octadecanoylsphing-4-enine + D-glucose. The enzyme catalyses beta-D-galactosyl-(1&lt;-&gt;1)-sphing-4-enine + H2O = sphing-4-enine + D-galactose. It catalyses the reaction beta-D-galactosyl-(1&lt;-&gt;1')-N-octadecanoylsphing-4-enine + H2O = N-octadecanoylsphing-4-enine + D-galactose. The catalysed reaction is a beta-D-xylosyl-(1&lt;-&gt;1')-N-acylsphing-4-enine + cholesterol = cholesteryl 3-beta-D-xyloside + an N-acylsphing-4-enine. Its activity is regulated as follows. Inhibited by 2,4-dinitrophenyl-2-fluoro-2-deoxy-beta-D-glucopyranoside. Inhibited by sodium taurocholate. Inhibited by alpha-1-C-nonyl-DIX/AnDIX. The glucosylceramidase activity is slightly inhibited by conduritol B epoxide/CBE while the galactosylceramidase activity is not. In terms of biological role, neutral cytosolic beta-glycosidase with a broad substrate specificity that could play a role in the catabolism of glycosylceramides. Has a significant glucosylceramidase activity in vitro. However, that activity is relatively low and its significance in vivo is not clear. Hydrolyzes galactosylceramides/GalCers, glucosylsphingosines/GlcSphs and galactosylsphingosines/GalSphs. However, the in vivo relevance of these activities is unclear. It can also hydrolyze a broad variety of dietary glycosides including phytoestrogens, flavonols, flavones, flavanones and cyanogens in vitro and could therefore play a role in the metabolism of xenobiotics. Possesses transxylosylase activity in vitro using xylosylated ceramides/XylCers (such as beta-D-xylosyl-(1&lt;-&gt;1')-N-acylsphing-4-enine) as xylosyl donors and cholesterol as acceptor. Could also play a role in the catabolism of cytosolic sialyl free N-glycans. The chain is Cytosolic beta-glucosidase from Homo sapiens (Human).